The chain runs to 700 residues: Elongation factor G (700 aa).

In terms of domain architecture, tr-type G spans 10-286 (KKVRNIGIMA…AVIDYLPSPL (277 aa)). Residues 19–26 (AHIDAGKT), 83–87 (DTPGH), and 137–140 (NKMD) each bind GTP.

It belongs to the TRAFAC class translation factor GTPase superfamily. Classic translation factor GTPase family. EF-G/EF-2 subfamily.

It localises to the cytoplasm. In terms of biological role, catalyzes the GTP-dependent ribosomal translocation step during translation elongation. During this step, the ribosome changes from the pre-translocational (PRE) to the post-translocational (POST) state as the newly formed A-site-bound peptidyl-tRNA and P-site-bound deacylated tRNA move to the P and E sites, respectively. Catalyzes the coordinated movement of the two tRNA molecules, the mRNA and conformational changes in the ribosome. This chain is Elongation factor G, found in Nocardia farcinica (strain IFM 10152).